Consider the following 598-residue polypeptide: Arginine--tRNA ligase (598 aa).

The 'HIGH' region motif lies at 131–141; sequence ANPTGPMHVGH. Residues 288-308 form a disordered region; it reads KLPPPKSKKGQPPAQPQPDEE.

Belongs to the class-I aminoacyl-tRNA synthetase family. As to quaternary structure, monomer.

The protein localises to the cytoplasm. It catalyses the reaction tRNA(Arg) + L-arginine + ATP = L-arginyl-tRNA(Arg) + AMP + diphosphate. The protein is Arginine--tRNA ligase of Anaeromyxobacter sp. (strain K).